Consider the following 354-residue polypeptide: Methylthioribose-1-phosphate isomerase (354 aa).

Substrate-binding positions include 58–60 (RGA), arginine 101, and glutamine 204. Aspartate 245 acts as the Proton donor in catalysis. Substrate is bound at residue 255–256 (NK).

It belongs to the eIF-2B alpha/beta/delta subunits family. MtnA subfamily.

It catalyses the reaction 5-(methylsulfanyl)-alpha-D-ribose 1-phosphate = 5-(methylsulfanyl)-D-ribulose 1-phosphate. Its pathway is amino-acid biosynthesis; L-methionine biosynthesis via salvage pathway; L-methionine from S-methyl-5-thio-alpha-D-ribose 1-phosphate: step 1/6. Catalyzes the interconversion of methylthioribose-1-phosphate (MTR-1-P) into methylthioribulose-1-phosphate (MTRu-1-P). The polypeptide is Methylthioribose-1-phosphate isomerase (Xanthomonas axonopodis pv. citri (strain 306)).